Reading from the N-terminus, the 284-residue chain is Tropomyosin Pen a 1.0102 (284 aa).

Residues 1-51 (MDAIKKKMQAMKLEKDNAMDRADTLEQQNKEANNRAEKSEEEVHNLQKRMQ) form a disordered region. Positions 1 to 273 (MDAIKKKMQA…KEKYKSITDE (273 aa)) form a coiled coil. Basic and acidic residues predominate over residues 12–45 (KLEKDNAMDRADTLEQQNKEANNRAEKSEEEVHN). IgE-binding regions lie at residues 43-57 (VHNL…ENDL), 85-105 (VAAL…SEER), 133-153 (RSLS…EARF), 187-202 (ESKI…VVGN), 247-284 (QKLQ…LSGY), 249-260 (LQKEVDRLEDEL), and 266-281 (KYKS…FSEL).

Belongs to the tropomyosin family. Homodimer.

In terms of biological role, tropomyosin, in association with the troponin complex, plays a central role in the calcium dependent regulation of muscle contraction. In Penaeus aztecus (Brown shrimp), this protein is Tropomyosin Pen a 1.0102.